A 339-amino-acid chain; its full sequence is Phenylalanine--tRNA ligase alpha subunit (339 aa).

Mg(2+) is bound at residue Glu254.

This sequence belongs to the class-II aminoacyl-tRNA synthetase family. Phe-tRNA synthetase alpha subunit type 1 subfamily. Tetramer of two alpha and two beta subunits. It depends on Mg(2+) as a cofactor.

The protein resides in the cytoplasm. The catalysed reaction is tRNA(Phe) + L-phenylalanine + ATP = L-phenylalanyl-tRNA(Phe) + AMP + diphosphate + H(+). The polypeptide is Phenylalanine--tRNA ligase alpha subunit (Desulforudis audaxviator (strain MP104C)).